We begin with the raw amino-acid sequence, 573 residues long: 60 kDa heat shock protein, mitochondrial (573 aa).

The N-terminal 26 residues, 1–26 (MLRLPTVFRQMRPVSRVLAPHLTRAY), are a transit peptide targeting the mitochondrion. An N6-succinyllysine modification is found at Lys-31. Phosphoserine is present on residues Ser-67 and Ser-70. Lys-75 is a binding site for ATP. Lys-75 is modified (N6-acetyllysine). At Lys-82 the chain carries N6-acetyllysine; alternate. The residue at position 82 (Lys-82) is an N6-succinyllysine; alternate. An N6-acetyllysine modification is found at Lys-87. Tyr-90 is modified (phosphotyrosine). Lys-91 is modified (N6-acetyllysine). 111–115 (DGTTT) contacts ATP. Lys-125 carries the post-translational modification N6-acetyllysine; alternate. The residue at position 125 (Lys-125) is an N6-succinyllysine; alternate. Lys-130 bears the N6-acetyllysine mark. Lys-133 carries the post-translational modification N6-acetyllysine; alternate. Residue Lys-133 is modified to N6-succinyllysine; alternate. Lys-133 carries the N6-malonyllysine; alternate modification. Lys-156 is modified (N6-acetyllysine). Lys-191, Lys-202, Lys-205, Lys-218, and Lys-236 each carry N6-acetyllysine; alternate. 5 positions are modified to N6-succinyllysine; alternate: Lys-191, Lys-202, Lys-205, Lys-218, and Lys-236. Position 249 is an N6-acetyllysine (Lys-249). Lys-250 carries the N6-acetyllysine; alternate modification. Lys-250 carries the N6-succinyllysine; alternate modification. Residues Lys-269 and Lys-292 each carry the N6-acetyllysine modification. At Lys-301 the chain carries N6-succinyllysine. The residue at position 314 (Lys-314) is an N6-acetyllysine. Lys-352 is subject to N6-acetyllysine; alternate. At Lys-352 the chain carries N6-succinyllysine; alternate. Residues Lys-359 and Lys-389 each carry the N6-acetyllysine modification. Residue Lys-396 is modified to N6-acetyllysine; alternate. Lys-396 carries the post-translational modification N6-succinyllysine; alternate. Position 410 is a phosphoserine (Ser-410). Gly-440 serves as a coordination point for ATP. Lys-469 carries the post-translational modification N6-acetyllysine. Lys-481 is subject to N6-acetyllysine; alternate. Lys-481 carries the N6-succinyllysine; alternate modification. Ser-488 carries the phosphoserine modification. Asp-520 is a binding site for ATP. Residue Lys-551 forms a Glycyl lysine isopeptide (Lys-Gly) (interchain with G-Cter in SUMO2) linkage.

This sequence belongs to the chaperonin (HSP60) family. In terms of assembly, homoheptamer arranged in a ring structure. The functional units of these chaperonins consist of heptameric rings of the large subunit Hsp60, which function as a back-to-back double ring. Interacts with 2 heptameric Hsp10 rings to form the symmetrical football complex. Interacts with HRAS. Interacts with ATAD3A. Interacts with ETFBKMT and EEF1AKMT3. Interacts with MFHAS1. As to quaternary structure, (Microbial infection) Interacts with hepatitis B virus/HBV protein X. (Microbial infection) Interacts with HTLV-1 protein p40tax.

The protein localises to the mitochondrion matrix. The enzyme catalyses ATP + H2O + a folded polypeptide = ADP + phosphate + an unfolded polypeptide.. Chaperonin implicated in mitochondrial protein import and macromolecular assembly. Together with Hsp10, facilitates the correct folding of imported proteins. May also prevent misfolding and promote the refolding and proper assembly of unfolded polypeptides generated under stress conditions in the mitochondrial matrix. The functional units of these chaperonins consist of heptameric rings of the large subunit Hsp60, which function as a back-to-back double ring. In a cyclic reaction, Hsp60 ring complexes bind one unfolded substrate protein per ring, followed by the binding of ATP and association with 2 heptameric rings of the co-chaperonin Hsp10. This leads to sequestration of the substrate protein in the inner cavity of Hsp60 where, for a certain period of time, it can fold undisturbed by other cell components. Synchronous hydrolysis of ATP in all Hsp60 subunits results in the dissociation of the chaperonin rings and the release of ADP and the folded substrate protein. The sequence is that of 60 kDa heat shock protein, mitochondrial (HSPD1) from Homo sapiens (Human).